The chain runs to 308 residues: Peroxisomal targeting signal 2 receptor (308 aa).

WD repeat units follow at residues 57 to 88 (DVEDSLFGVRWSQNCENQVYACCGDGSLRLFD), 101 to 132 (EHKAEIVAIDTNTVDRRIVVTGSWDGTIKLWL), 145 to 176 (GSNSRILTVATHYSSPNLLGYTSSDGLCKFWD), 187 to 218 (EIPNQITCMNWSKSNHRMVYTADNNNLVYCYD), 231 to 262 (GHQLAVRSIKSSNSAHDLLATASYDMTSRIFD), and 274 to 306 (LHSEFVRDVDWSDFGDGSWIASVGWDESLYIWN).

This sequence belongs to the WD repeat peroxin-7 family. As to quaternary structure, interacts with PEX21.

It localises to the cytoplasm. Its subcellular location is the cytosol. The protein resides in the peroxisome matrix. In terms of biological role, receptor required for the peroxisomal import of proteins containing a C-terminal PTS2-type peroxisomal targeting signal, such as 3-oxoacyl-CoA thiolase. Specifically binds to cargo proteins containing a PTS2 peroxisomal targeting signal in the cytosol. Cargo protein-binding triggers interaction with PEX21 and formation of a ternary complex composed of PEX21 and PEX7 along with PTS2-containing cargo proteins, which is tranlocated into peroxisomes by passing through the PEX13-PEX14 docking complex. The chain is Peroxisomal targeting signal 2 receptor (pex7) from Schizosaccharomyces pombe (strain 972 / ATCC 24843) (Fission yeast).